We begin with the raw amino-acid sequence, 283 residues long: Pantothenate synthetase (283 aa).

30–37 (MGNLHSGH) lines the ATP pocket. His-37 serves as the catalytic Proton donor. A (R)-pantoate-binding site is contributed by Gln-61. Gln-61 contacts beta-alanine. ATP is bound at residue 149 to 152 (GEKD). Gln-155 contributes to the (R)-pantoate binding site. ATP is bound by residues Val-178 and 186–189 (LSSR).

It belongs to the pantothenate synthetase family. In terms of assembly, homodimer.

It is found in the cytoplasm. It carries out the reaction (R)-pantoate + beta-alanine + ATP = (R)-pantothenate + AMP + diphosphate + H(+). Its pathway is cofactor biosynthesis; (R)-pantothenate biosynthesis; (R)-pantothenate from (R)-pantoate and beta-alanine: step 1/1. In terms of biological role, catalyzes the condensation of pantoate with beta-alanine in an ATP-dependent reaction via a pantoyl-adenylate intermediate. This chain is Pantothenate synthetase, found in Pseudomonas savastanoi pv. phaseolicola (strain 1448A / Race 6) (Pseudomonas syringae pv. phaseolicola (strain 1448A / Race 6)).